Consider the following 153-residue polypeptide: Superoxide dismutase [Cu-Zn] (153 aa).

Cu cation-binding residues include histidine 45, histidine 47, and histidine 62. The cysteines at positions 56 and 145 are disulfide-linked. Zn(2+) contacts are provided by histidine 62, histidine 70, histidine 79, and aspartate 82. A Cu cation-binding site is contributed by histidine 119.

The protein belongs to the Cu-Zn superoxide dismutase family. As to quaternary structure, homodimer. The cofactor is Cu cation. Zn(2+) is required as a cofactor.

The protein localises to the cytoplasm. It catalyses the reaction 2 superoxide + 2 H(+) = H2O2 + O2. Its function is as follows. Destroys radicals which are normally produced within the cells and which are toxic to biological systems. The polypeptide is Superoxide dismutase [Cu-Zn] (Drosophila teissieri (Fruit fly)).